Reading from the N-terminus, the 328-residue chain is 2-hydroxyisoflavanone dehydratase (328 aa).

Residues 85–87 carry the Involved in the stabilization of the negatively charged intermediate by the formation of the oxyanion hole motif; the sequence is HGG. Active-site residues include Thr-173, Asp-272, and His-304.

The protein belongs to the 'GDXG' lipolytic enzyme family.

The enzyme catalyses (2R,3S)-2,4',7-trihydroxyisoflavanone = daidzein + H2O + H(+). The catalysed reaction is 2-hydroxy-2,3-dihydrogenistein = genistein + H2O + H(+). It catalyses the reaction a carboxylic ester + H2O = an alcohol + a carboxylate + H(+). It participates in secondary metabolite biosynthesis; flavonoid biosynthesis. Functionally, dehydratase that mediates the biosynthesis of isoflavonoids. Can better use 2,7-dihydroxy-4'-methoxyisoflavanone as substrate. Has also a slight carboxylesterase activity toward p-nitrophenyl butyrate. This is 2-hydroxyisoflavanone dehydratase (HIDM) from Glycyrrhiza echinata (Licorice).